Here is a 144-residue protein sequence, read N- to C-terminus: Large ribosomal subunit protein uL24 (144 aa).

The tract at residues 102–144 is disordered; the sequence is NIVVEKPEPEPEPRKEETAEAQEAKEEAVAEEKTEVDDNDKQN. Positions 103–134 are enriched in basic and acidic residues; that stretch reads IVVEKPEPEPEPRKEETAEAQEAKEEAVAEEK. Residues 135–144 show a composition bias toward acidic residues; the sequence is TEVDDNDKQN.

Belongs to the universal ribosomal protein uL24 family. In terms of assembly, part of the 50S ribosomal subunit.

Functionally, one of two assembly initiator proteins, it binds directly to the 5'-end of the 23S rRNA, where it nucleates assembly of the 50S subunit. Its function is as follows. Located at the polypeptide exit tunnel on the outside of the subunit. The sequence is that of Large ribosomal subunit protein uL24 (rpl24) from Thermoplasma acidophilum (strain ATCC 25905 / DSM 1728 / JCM 9062 / NBRC 15155 / AMRC-C165).